The primary structure comprises 349 residues: MKKQHIINETFLDEILAQKLGTTYIPPTGIKDADFEQAAKHFINLLLRADGLKPIKTAVVHPIDKESLLGAVRAAQFNVIKPVLIGPQHKIESVAKVNDVDLENYQVINAEHSHEAAKKAVELAKKREVSAIMKGALHTDELMSAVVYKENGLRTERRISHAFLMAVATFPKPFIITDAAINIRPTLEDKRDIVQNAIDLMHMIKEDKQVRVAVLSAVETVTSAIPTTLDAAALSKMADRGQIMNAIVDGPLAFDNAISLFAAEAKGINSPVSGNADILVAPDLESGNLLAKQLKYLGQAVMAGIVLGARVPIILTSRADPIDMRVISCVLASFIYNQTKAKLHIQASQ.

Belongs to the phosphate acetyltransferase and butyryltransferase family.

It localises to the cytoplasm. The enzyme catalyses acetyl-CoA + phosphate = acetyl phosphate + CoA. The protein operates within metabolic intermediate biosynthesis; acetyl-CoA biosynthesis; acetyl-CoA from acetate: step 2/2. The polypeptide is Phosphate acetyltransferase (pta) (Rickettsia typhi (strain ATCC VR-144 / Wilmington)).